The sequence spans 185 residues: Phosphatidylglycerophosphatase GEP4, mitochondrial (185 aa).

Positions 45–49 (DKDNC) match the Phosphoryl acceptor motif.

Belongs to the GEP4 family.

The protein resides in the mitochondrion inner membrane. The catalysed reaction is a 1,2-diacyl-sn-glycero-3-phospho-(1'-sn-glycero-3'-phosphate) + H2O = a 1,2-diacyl-sn-glycero-3-phospho-(1'-sn-glycerol) + phosphate. It functions in the pathway phospholipid metabolism; phosphatidylglycerol biosynthesis; phosphatidylglycerol from CDP-diacylglycerol: step 2/2. Functionally, phosphatidylglycerophosphatase involved in the biosynthesis of cardiolipin (CL), a unique dimeric phosphoglycerolipid predominantly present in mitochondrial membranes and which has important functions for cellular energy metabolism, mitochondrial dynamics and the initiation of apoptotic pathways. Required for the stability of respiratory chain supercomplexes and for growth at elevated temperature, in presence of ethidium bromide or in absence of prohibitins. The protein is Phosphatidylglycerophosphatase GEP4, mitochondrial (GEP4) of Saccharomyces cerevisiae (strain ATCC 204508 / S288c) (Baker's yeast).